The sequence spans 101 residues: Large ribosomal subunit protein bL28 (101 aa).

It belongs to the bacterial ribosomal protein bL28 family.

This chain is Large ribosomal subunit protein bL28, found in Rhodopseudomonas palustris (strain BisA53).